Here is a 203-residue protein sequence, read N- to C-terminus: Peptidyl-tRNA hydrolase (203 aa).

Tyr18 is a tRNA binding site. His23 (proton acceptor) is an active-site residue. TRNA contacts are provided by Tyr69, Asn71, and Asn117.

The protein belongs to the PTH family. In terms of assembly, monomer.

Its subcellular location is the cytoplasm. It catalyses the reaction an N-acyl-L-alpha-aminoacyl-tRNA + H2O = an N-acyl-L-amino acid + a tRNA + H(+). In terms of biological role, hydrolyzes ribosome-free peptidyl-tRNAs (with 1 or more amino acids incorporated), which drop off the ribosome during protein synthesis, or as a result of ribosome stalling. Its function is as follows. Catalyzes the release of premature peptidyl moieties from peptidyl-tRNA molecules trapped in stalled 50S ribosomal subunits, and thus maintains levels of free tRNAs and 50S ribosomes. This is Peptidyl-tRNA hydrolase from Parasynechococcus marenigrum (strain WH8102).